Reading from the N-terminus, the 370-residue chain is Glutamate 5-kinase (370 aa).

Lysine 17 contributes to the ATP binding site. 3 residues coordinate substrate: serine 56, aspartate 143, and asparagine 155. 175 to 176 provides a ligand contact to ATP; that stretch reads SD. A PUA domain is found at 280–357; sequence KGEITVDAGA…DEIEGILGYP (78 aa).

Belongs to the glutamate 5-kinase family.

Its subcellular location is the cytoplasm. The enzyme catalyses L-glutamate + ATP = L-glutamyl 5-phosphate + ADP. The protein operates within amino-acid biosynthesis; L-proline biosynthesis; L-glutamate 5-semialdehyde from L-glutamate: step 1/2. In terms of biological role, catalyzes the transfer of a phosphate group to glutamate to form L-glutamate 5-phosphate. The polypeptide is Glutamate 5-kinase (Paracoccus denitrificans (strain Pd 1222)).